The chain runs to 337 residues: Tetraacyldisaccharide 4'-kinase (337 aa).

55–62 is a binding site for ATP; it reads NAGGTGKT.

Belongs to the LpxK family.

It carries out the reaction a lipid A disaccharide + ATP = a lipid IVA + ADP + H(+). It functions in the pathway glycolipid biosynthesis; lipid IV(A) biosynthesis; lipid IV(A) from (3R)-3-hydroxytetradecanoyl-[acyl-carrier-protein] and UDP-N-acetyl-alpha-D-glucosamine: step 6/6. Its function is as follows. Transfers the gamma-phosphate of ATP to the 4'-position of a tetraacyldisaccharide 1-phosphate intermediate (termed DS-1-P) to form tetraacyldisaccharide 1,4'-bis-phosphate (lipid IVA). This Dinoroseobacter shibae (strain DSM 16493 / NCIMB 14021 / DFL 12) protein is Tetraacyldisaccharide 4'-kinase.